The sequence spans 398 residues: Alpha-monoglucosyldiacylglycerol synthase (398 aa).

This sequence belongs to the glycosyltransferase group 1 family. Glycosyltransferase 4 subfamily. Requires Mg(2+) as cofactor.

Its subcellular location is the cell membrane. The catalysed reaction is a 1,2-diacyl-sn-glycerol + UDP-alpha-D-glucose = a 1,2-diacyl-3-O-(alpha-D-glucopyranosyl)-sn-glycerol + UDP + H(+). With respect to regulation, activated by the negatively charged lipids phosphatidylglycerol (PG), cardiolipin (CL), dodecylphosphate-rac-glycerol (PDG), 1,2-dioleoyl-phosphatidylglycerol (DOPG) and phosphatidylserine (PS). Glucosyltransferase involved in the biosynthesis of the non-bilayer-prone membrane lipid alpha-monoglucosyldiacylglycerol. This is a major component for maintaining a certain anionic lipid surface charge density, for balancing the bilayer to non-bilayer phase equilibria and for keeping a constant lipid bilayer spontaneous curvature (curvature packing stress). Catalyzes the transfer of a glucosyl residue from UDP-Glc to diacylglycerol (DAG) acceptor to form the corresponding alpha-glucosyl-DAG (1,2-diacyl-3-O-(alpha-D-glucopyranosyl)-sn-glycerol). It can only use UDP-Glc as sugar donor and DAG is the preferred substrate. This Acholeplasma laidlawii protein is Alpha-monoglucosyldiacylglycerol synthase (mgs).